The sequence spans 337 residues: MSVEQKLYLITRNLQEILGEEELKRIVSERELNVYWGTAITGKPHIAYLVPLMKIKDFVDAGCNVKILFADIHGFLDNLKAPIEKVQHRCAYYEKLIKSALKMLCVDLDRIQFVKGSEFQKSERYTMDLYRILSITSKHDAKKAGAEVVRQVENPMVSSLVYPSMQALDEVHLSVDAQFGGVDQRKIFTYARKYLPLLNYEKRIHLMSPMLPGLNSDKMSSSDDLSKIDLMDSKEAIWRKIRKCFCEEGNKDNGLMMIFSHIVFPILQLKGECVRITDRDGREMAFEKYQEFEEEFVRKSIHPGDLKSNAARLIDEIIRPIREEMEKDLDMVREAYN.

Tyr35 serves as a coordination point for L-tyrosine. Positions 40 to 48 match the 'HIGH' region motif; that stretch reads ITGKPHIAY. L-tyrosine is bound by residues Tyr162, Gln166, Asp169, and Gln184. The short motif at 218–222 is the 'KMSKS' region element; that stretch reads KMSSS.

This sequence belongs to the class-I aminoacyl-tRNA synthetase family. In terms of assembly, homodimer.

The protein localises to the cytoplasm. It catalyses the reaction tRNA(Tyr) + L-tyrosine + ATP = L-tyrosyl-tRNA(Tyr) + AMP + diphosphate + H(+). This is Probable tyrosine--tRNA ligase, cytoplasmic from Encephalitozoon cuniculi (strain GB-M1) (Microsporidian parasite).